Here is a 273-residue protein sequence, read N- to C-terminus: Eukaryotic translation initiation factor 3 subunit J (273 aa).

A disordered region spans residues 1–158 (MPTKKWEDEE…DPSDPSKTVE (158 aa)). The span at 34-54 (DEEANDSDVLDSWDAAEDSEV) shows a compositional bias: acidic residues. A coiled-coil region spans residues 50 to 97 (EDSEVEREKAKKAAEAKAKAEAEAKANKKTKAARINEHKQRRKEAEES). Residues 55–75 (EREKAKKAAEAKAKAEAEAKA) show a composition bias toward basic and acidic residues. The segment covering 95-104 (EESDESDDET) has biased composition (acidic residues). Basic and acidic residues predominate over residues 105-126 (ESQRRERLRRTEKEADLAHAED).

This sequence belongs to the eIF-3 subunit J family. As to quaternary structure, component of the eukaryotic translation initiation factor 3 (eIF-3) complex.

Its subcellular location is the cytoplasm. Component of the eukaryotic translation initiation factor 3 (eIF-3) complex, which is involved in protein synthesis of a specialized repertoire of mRNAs and, together with other initiation factors, stimulates binding of mRNA and methionyl-tRNAi to the 40S ribosome. The eIF-3 complex specifically targets and initiates translation of a subset of mRNAs involved in cell proliferation. In Pyricularia oryzae (strain 70-15 / ATCC MYA-4617 / FGSC 8958) (Rice blast fungus), this protein is Eukaryotic translation initiation factor 3 subunit J.